Here is a 152-residue protein sequence, read N- to C-terminus: Large ribosomal subunit protein uL30 (152 aa).

Belongs to the universal ribosomal protein uL30 family. Part of the 50S ribosomal subunit.

This Archaeoglobus fulgidus (strain ATCC 49558 / DSM 4304 / JCM 9628 / NBRC 100126 / VC-16) protein is Large ribosomal subunit protein uL30.